A 754-amino-acid polypeptide reads, in one-letter code: 5-methyltetrahydropteroyltriglutamate--homocysteine methyltransferase (754 aa).

Residues 17–20 (RELK) and lysine 117 contribute to the 5-methyltetrahydropteroyltri-L-glutamate site. L-homocysteine is bound by residues 431–433 (IGS) and glutamate 484. L-methionine is bound by residues 431 to 433 (IGS) and glutamate 484. Residues 515-516 (RC) and tryptophan 561 contribute to the 5-methyltetrahydropteroyltri-L-glutamate site. Aspartate 599 is an L-homocysteine binding site. Aspartate 599 is an L-methionine binding site. 5-methyltetrahydropteroyltri-L-glutamate is bound at residue glutamate 605. Zn(2+) contacts are provided by histidine 641, cysteine 643, and glutamate 665. Histidine 694 acts as the Proton donor in catalysis. Cysteine 726 lines the Zn(2+) pocket.

It belongs to the vitamin-B12 independent methionine synthase family. Requires Zn(2+) as cofactor.

It carries out the reaction 5-methyltetrahydropteroyltri-L-glutamate + L-homocysteine = tetrahydropteroyltri-L-glutamate + L-methionine. It functions in the pathway amino-acid biosynthesis; L-methionine biosynthesis via de novo pathway; L-methionine from L-homocysteine (MetE route): step 1/1. Functionally, catalyzes the transfer of a methyl group from 5-methyltetrahydrofolate to homocysteine resulting in methionine formation. The sequence is that of 5-methyltetrahydropteroyltriglutamate--homocysteine methyltransferase from Salmonella paratyphi A (strain ATCC 9150 / SARB42).